Reading from the N-terminus, the 110-residue chain is Large ribosomal subunit protein uL22 (110 aa).

Belongs to the universal ribosomal protein uL22 family. As to quaternary structure, part of the 50S ribosomal subunit.

Its function is as follows. This protein binds specifically to 23S rRNA; its binding is stimulated by other ribosomal proteins, e.g. L4, L17, and L20. It is important during the early stages of 50S assembly. It makes multiple contacts with different domains of the 23S rRNA in the assembled 50S subunit and ribosome. In terms of biological role, the globular domain of the protein is located near the polypeptide exit tunnel on the outside of the subunit, while an extended beta-hairpin is found that lines the wall of the exit tunnel in the center of the 70S ribosome. The protein is Large ribosomal subunit protein uL22 of Methylococcus capsulatus (strain ATCC 33009 / NCIMB 11132 / Bath).